A 113-amino-acid chain; its full sequence is MGGRGMNPAKMKQMMKQMGIDVKELKDVKEVIIKTADSNIVIENANVTIMTVQGSETYQIVGDAKEVPKSLEIPADDIKLVMEQTGVSEEEARNALKNSNGDLAEAIVALSSA.

One can recognise an NAC-A/B domain in the interval 5 to 73 (GMNPAKMKQM…AKEVPKSLEI (69 aa)).

Belongs to the NAC-alpha family. In terms of assembly, homodimer. Interacts with the ribosome. Binds ribosomal RNA.

Contacts the emerging nascent chain on the ribosome. This chain is Nascent polypeptide-associated complex protein, found in Methanosarcina acetivorans (strain ATCC 35395 / DSM 2834 / JCM 12185 / C2A).